The chain runs to 304 residues: Probable UDP-3-O-acylglucosamine N-acyltransferase 2, mitochondrial (304 aa).

Residues 1–47 (MAATLWRLYSKSICNSLQGIILNKPFIQKQLLLSSRTRSLSFSSDSQ) constitute a mitochondrion transit peptide. Residue 159–161 (FGF) coordinates UDP-N-acetyl-alpha-D-glucosamine. Positions 209 and 213 each coordinate hexadecanoate. Residue H216 is the Proton acceptor of the active site. UDP-N-acetyl-alpha-D-glucosamine-binding residues include N217, S235, and H253.

Belongs to the transferase hexapeptide repeat family. LpxD subfamily. Homotrimer.

The protein localises to the mitochondrion. It carries out the reaction a UDP-3-O-[(3R)-3-hydroxyacyl]-alpha-D-glucosamine + a (3R)-hydroxyacyl-[ACP] = a UDP-2-N,3-O-bis[(3R)-3-hydroxyacyl]-alpha-D-glucosamine + holo-[ACP] + H(+). It functions in the pathway glycolipid biosynthesis; lipid IV(A) biosynthesis; lipid IV(A) from (3R)-3-hydroxytetradecanoyl-[acyl-carrier-protein] and UDP-N-acetyl-alpha-D-glucosamine: step 3/6. Involved in the biosynthesis of lipid A, a phosphorylated glycolipid that in bacteria anchors the lipopolysaccharide to the outer membrane of the cell. Lipid A-like molecules in plants may serve as structural components of the outer membranes of mitochondria and/or chloroplasts, or may be involved in signal transduction or plant defense responses. This is Probable UDP-3-O-acylglucosamine N-acyltransferase 2, mitochondrial (LPXD2) from Arabidopsis thaliana (Mouse-ear cress).